Reading from the N-terminus, the 563-residue chain is BOS complex subunit NCLN (563 aa).

The signal sequence occupies residues 1–42; that stretch reads MLEEAGEVLENVLKASCLPLGFIVFLPAVLLLVAPPLPAADA. Residues 43–522 are Lumenal-facing; sequence AHEFTVYRMQ…VMNAYRVKPA (480 aa). N-linked (GlcNAc...) asparagine glycans are attached at residues N241 and N428. Residues 523–543 form a helical membrane-spanning segment; it reads IFDLLLALCIGAYLGMAYTAV. Over 544-563 the chain is Cytoplasmic; it reads QHFHVLYKTVQRLLLKAKAQ.

It belongs to the nicastrin family. Component of the back of Sec61 (BOS) complex, composed of NCLN/Nicalin, NOMO1 and TMEM147. The BOS complex is part of the multi-pass translocon (MPT) complex, composed of three subcomplexes, the GEL complex (composed of RAB5IF/OPTI and TMCO1), the BOS complex (composed of NCLN/Nicalin, NOMO1 and TMEM147) and the PAT complex (composed of WDR83OS/Asterix and CCDC47). The MPT complex associates with the SEC61 complex.

It is found in the endoplasmic reticulum membrane. In terms of biological role, component of the multi-pass translocon (MPT) complex that mediates insertion of multi-pass membrane proteins into the lipid bilayer of membranes. The MPT complex takes over after the SEC61 complex: following membrane insertion of the first few transmembrane segments of proteins by the SEC61 complex, the MPT complex occludes the lateral gate of the SEC61 complex to promote insertion of subsequent transmembrane regions. May antagonize Nodal signaling and subsequent organization of axial structures during mesodermal patterning, via its interaction with NOMO. The sequence is that of BOS complex subunit NCLN (Ncln) from Rattus norvegicus (Rat).